We begin with the raw amino-acid sequence, 104 residues long: Protein U9 (104 aa).

The helical transmembrane segment at 37–54 (GVQGLNADCSYVKSQCIK) threads the bilayer.

The protein localises to the host membrane. The sequence is that of Protein U9 (U9) from Human herpesvirus 6B (HHV-6 variant B).